A 72-amino-acid chain; its full sequence is uncharacterized protein (72 aa).

It localises to the cytoplasm. The protein localises to the nucleus. This is an uncharacterized protein from Saccharomyces cerevisiae (strain ATCC 204508 / S288c) (Baker's yeast).